Here is a 59-residue protein sequence, read N- to C-terminus: Photosystem II reaction center protein K (59 aa).

Positions 1-22 are excised as a propeptide; sequence MLNIFSLICLSSALHSSSFFFA. The helical transmembrane segment at 38–58 threads the bilayer; that stretch reads MPVIPVLFFLLALVWQAAVSF.

Belongs to the PsbK family. In terms of assembly, PSII is composed of 1 copy each of membrane proteins PsbA, PsbB, PsbC, PsbD, PsbE, PsbF, PsbH, PsbI, PsbJ, PsbK, PsbL, PsbM, PsbT, PsbX, PsbY, PsbZ, Psb30/Ycf12, at least 3 peripheral proteins of the oxygen-evolving complex and a large number of cofactors. It forms dimeric complexes.

The protein localises to the plastid. The protein resides in the chloroplast thylakoid membrane. Functionally, one of the components of the core complex of photosystem II (PSII). PSII is a light-driven water:plastoquinone oxidoreductase that uses light energy to abstract electrons from H(2)O, generating O(2) and a proton gradient subsequently used for ATP formation. It consists of a core antenna complex that captures photons, and an electron transfer chain that converts photonic excitation into a charge separation. The protein is Photosystem II reaction center protein K of Piper cenocladum (Ant piper).